A 448-amino-acid polypeptide reads, in one-letter code: UPF0210 protein PAE3581 (448 aa).

The protein belongs to the UPF0210 family.

The polypeptide is UPF0210 protein PAE3581 (Pyrobaculum aerophilum (strain ATCC 51768 / DSM 7523 / JCM 9630 / CIP 104966 / NBRC 100827 / IM2)).